Reading from the N-terminus, the 473-residue chain is Mitochondrial adenyl nucleotide antiporter SLC25A24-B (473 aa).

Residues 1–173 (MLEQVQKFLL…RYWKHSTVLD (173 aa)) are regulatory N-terminal domain. Topologically, residues 1-197 (MLEQVQKFLL…EKKTGQWWKQ (197 aa)) are mitochondrial intermembrane. EF-hand domains are found at residues 19–54 (DSQS…MGME), 55–88 (VGKG…EEHE), 86–121 (EHEK…LGIK), and 122–157 (ISLD…NPAD). Residues Asp32, Asn34, Asp36, Lys38, Glu43, Asp68, Asn70, Asp72, His74, Glu79, Asp99, Asn101, Asp103, Lys105, Glu110, Asp135, Asp137, Thr139, Thr141, and Glu146 each coordinate Ca(2+). Positions 159–168 (IQQIIRYWKH) are linker region. The segment at 174-473 (IGDSLTIPDE…YEKMKVQLGI (300 aa)) is C-terminal transmembrane transporter domain. Solcar repeat units lie at residues 192–277 (GQWW…YKKL), 285–370 (LGTA…LKNY), and 382–470 (PGVL…MKVQ). Residues 198 to 215 (LMAGGMAGAVSRTGTAPL) traverse the membrane as a helical segment. Topologically, residues 216-251 (DRLKVMMQVHGSKGNSNIITGLKQMVKEGGIRSLWR) are mitochondrial matrix. Residues 252–271 (GNGVNVIKIAPETAMKFWAY) traverse the membrane as a helical segment. At 272-294 (EQYKKLFTSESGKLGTAERFVAG) the chain is on the mitochondrial intermembrane side. A helical transmembrane segment spans residues 295–308 (SLAGATAQTSIYPM). The Mitochondrial matrix portion of the chain corresponds to 309–344 (EVLKTRLAVGRTGQYSGMFDCAKKIMQKEGIRAFYK). A helical membrane pass occupies residues 345-364 (GYIPNILGIIPYAGIDLAIY). Residues 365–387 (ETLKNYWLQNHAKDSANPGVLVL) lie on the Mitochondrial intermembrane side of the membrane. The chain crosses the membrane as a helical span at residues 388–405 (LGCGTASSTCGQLASYPL). Residues 406–444 (ALIRTRMQAQASIEGAPQLNMGGLFRKIVAKEGFLGLYR) lie on the Mitochondrial matrix side of the membrane. A helical membrane pass occupies residues 445-464 (GIGPNFLKVLPAVSISYVVY). The Mitochondrial intermembrane portion of the chain corresponds to 465–473 (EKMKVQLGI).

The protein belongs to the mitochondrial carrier (TC 2.A.29) family. In terms of assembly, monomer.

It is found in the mitochondrion inner membrane. It catalyses the reaction Mg(2+)(out) + phosphate(in) + ATP(out) = Mg(2+)(in) + phosphate(out) + ATP(in). The enzyme catalyses ADP(out) + phosphate(in) + H(+)(out) = ADP(in) + phosphate(out) + H(+)(in). The catalysed reaction is AMP(out) + phosphate(in) = AMP(in) + phosphate(out). It carries out the reaction phosphate(in) + ATP(out) + 2 H(+)(out) = phosphate(out) + ATP(in) + 2 H(+)(in). It catalyses the reaction dADP(in) + ADP(out) = dADP(out) + ADP(in). The enzyme catalyses Mg(2+)(in) + ADP(out) + ATP(in) + H(+)(out) = Mg(2+)(out) + ADP(in) + ATP(out) + H(+)(in). The catalysed reaction is ADP(out) + diphosphate(in) = ADP(in) + diphosphate(out). It carries out the reaction dAMP(in) + ADP(out) + H(+)(out) = dAMP(out) + ADP(in) + H(+)(in). It catalyses the reaction 3'-AMP(in) + ADP(out) + H(+)(out) = 3'-AMP(out) + ADP(in) + H(+)(in). The enzyme catalyses dAMP(out) + phosphate(in) = dAMP(in) + phosphate(out). The catalysed reaction is 3'-AMP(out) + phosphate(in) = 3'-AMP(in) + phosphate(out). It carries out the reaction dADP(out) + phosphate(in) + H(+)(out) = dADP(in) + phosphate(out) + H(+)(in). With respect to regulation, activated by an increase in cytosolic calcium levels that induce a conformational change of the N-terminal regulatory domain, uncapping the channel and allowing transport. Inhibited by bathophenanthroline, mersalyl, p-hydroxymercuribenzoate, bromcresol purple and tannic acid. In terms of biological role, electroneutral antiporter that mediates the transport of adenyl nucleotides through the inner mitochondrial membrane. Originally identified as an ATP-magnesium/inorganic phosphate antiporter, it also acts as a broad specificity adenyl nucleotide antiporter. By regulating the mitochondrial matrix adenyl nucleotide pool could adapt to changing cellular energetic demands and indirectly regulate adenyl nucleotide-dependent metabolic pathways. The chain is Mitochondrial adenyl nucleotide antiporter SLC25A24-B (slc25a24-b) from Xenopus laevis (African clawed frog).